Consider the following 219-residue polypeptide: MTESHIDFRRAKFLISAPDIAHLDQYLPGDVGVEIAFAGRSNAGKSSALNALTEQKNLARTSKTPGRTQLINVFELDAQRRLVDLPGYGFAQVPLAMKLKWQQSLGEYLQKRACLSGVVVLMDIRHPLKDLDMQMIEWAVASEIPVLALLTKSDKLAQSAKMKTVNEVRKALVEFGDWVQVEPFSALKGTGKPKVLSILNEWCHPQWLADELENQEDAE.

Residues valine 31–proline 205 form the EngB-type G domain. Residues glycine 39 to serine 46, glycine 66 to leucine 70, aspartate 84 to glycine 87, threonine 151 to aspartate 154, and phenylalanine 184 to alanine 186 contribute to the GTP site. Positions 46 and 68 each coordinate Mg(2+).

The protein belongs to the TRAFAC class TrmE-Era-EngA-EngB-Septin-like GTPase superfamily. EngB GTPase family. Requires Mg(2+) as cofactor.

Its function is as follows. Necessary for normal cell division and for the maintenance of normal septation. This is Probable GTP-binding protein EngB from Shewanella sp. (strain MR-7).